The primary structure comprises 662 residues: Methyl-accepting chemotaxis protein McpB (662 aa).

The Cytoplasmic portion of the chain corresponds to 1–16; the sequence is MKTFINWLKKPSISKK. The chain crosses the membrane as a helical span at residues 17 to 37; it reads LIVSFIAILIIPILILEFSSY. At 38-282 the chain is on the extracellular side; that stretch reads RSASGKLDQE…IKDASKSVLT (245 aa). One can recognise a Cache domain in the interval 153–229; sequence VTDPYVAASD…KAGEKLSGDW (77 aa). A helical membrane pass occupies residues 283-303; sequence TGMIVLIASIVAGGILILFIV. The region spanning 304 to 356 is the HAMP domain; that stretch reads RSITKPLKRLVQSSKTISRGDLTETIEIHSKDELGELGESFNEMGQSLRSLIS. Residues 304 to 662 are Cytoplasmic-facing; the sequence is RSITKPLKRL…RDLTKQFKIE (359 aa). 2 positions are modified to glutamate methyl ester (Gln): Gln371 and Gln595. Residues 375–611 form the Methyl-accepting transducer domain; the sequence is SAGQTSKATE…HVSAAVSGIA (237 aa). Glutamate methyl ester (Glu) occurs at positions 630 and 637.

It belongs to the methyl-accepting chemotaxis (MCP) protein family. In terms of assembly, interacts with FloT. Some glutamine residues are deamidated to glutamate by CheD and subsequently methylated. In terms of processing, the demethylation is selective. Gln-371 is demethylated only upon asparagine addition whereas Glu-637 is demethylated only upon asparagine removal. Glu-630 appears indiscriminate and is demethylated upon both addition and removal of asparagine.

It is found in the cell membrane. The protein resides in the membrane raft. Chemotactic-signal transducers respond to changes in the concentration of attractants and repellents in the environment, transduce a signal from the outside to the inside of the cell, and facilitate sensory adaptation through the variation of the level of methylation. All amino acids serve as attractants in B.subtilis, they appear to cause an increase in the turnover methyl groups, leading to methylation of an unidentified acceptor, while repellents have been shown to cause a decrease in methyl group turnover. The methyl groups are added by a methyltransferase and removed by a methylesterase. McpB is required for taxis towards asparagine, aspartate, glutamine, and histidine. This Bacillus subtilis (strain 168) protein is Methyl-accepting chemotaxis protein McpB (mcpB).